A 1005-amino-acid polypeptide reads, in one-letter code: Protein TIC 214 (1005 aa).

6 consecutive transmembrane segments (helical) span residues 25 to 45 (VGLYYGFISAFSIGSSYLFLL), 67 to 87 (FFTGQLLIFISILYGPLHLAL), 91 to 111 (HTILLLLAPYFFFHFLSSNSG), 131 to 151 (SFQLVFLHSLLFQLFSLSVLG), 177 to 197 (FVGWLIGHILVLKWAGLVFVW), and 304 to 324 (LFSIILFAFFLLYLDRTPLLY). 2 disordered regions span residues 457 to 481 (VEEGVQEKQEGFPEEPISPSEEREE) and 767 to 833 (KKKK…KRKQ). Basic residues predominate over residues 783–810 (KQKKVKSKQKKVKSKQKKVKSKQKKVKS). Basic and acidic residues predominate over residues 811-824 (KQNEIKSKQNEIKS).

Belongs to the TIC214 family. In terms of assembly, part of the Tic complex.

The protein localises to the plastid. The protein resides in the chloroplast inner membrane. Involved in protein precursor import into chloroplasts. May be part of an intermediate translocation complex acting as a protein-conducting channel at the inner envelope. The sequence is that of Protein TIC 214 from Oenothera berteroana (Bertero's evening primrose).